A 190-amino-acid polypeptide reads, in one-letter code: Tegument antigen (190 aa).

EF-hand domains are found at residues 8 to 43 (SQME…YRLD) and 51 to 77 (IARF…KVSE). Asp55, Asp57, Asp59, Lys61, and Glu66 together coordinate Ca(2+).

As to expression, adult and schistosomula tegument.

The sequence is that of Tegument antigen from Schistosoma mansoni (Blood fluke).